Reading from the N-terminus, the 705-residue chain is Cell cycle serine/threonine-protein kinase CDC5/MSD2 (705 aa).

The residue at position 23 (Thr23) is a Phosphothreonine. Over residues Gln41–His53 the composition is skewed to basic and acidic residues. A disordered region spans residues Gln41–Lys63. The Protein kinase domain maps to Tyr82–Phe337. ATP is bound by residues Leu88–Cys96 and Lys110. Asp204 acts as the Proton acceptor in catalysis. Phosphoserine is present on Ser419. Residues Ile513–Ala595 form the POLO box 1 domain. The Zn(2+) site is built by Glu553, His569, His609, and Asp612. One can recognise a POLO box 2 domain in the interval Phe614–Thr700.

It belongs to the protein kinase superfamily. Ser/Thr protein kinase family. CDC5/Polo subfamily. As to quaternary structure, interacts with CDC48; the interaction is likely to result in CDC5 degradation. Interacts with CSA1.

The protein localises to the cytoplasm. It is found in the cytoskeleton. Its subcellular location is the microtubule organizing center. The protein resides in the spindle pole body. The enzyme catalyses L-seryl-[protein] + ATP = O-phospho-L-seryl-[protein] + ADP + H(+). The catalysed reaction is L-threonyl-[protein] + ATP = O-phospho-L-threonyl-[protein] + ADP + H(+). Functionally, protein kinase required for the cell cycle where it is involved in mitotic exit. A component of the fear (CDC14 early anaphase release) network which promotes CDC14 release from the nucleolus during early anaphase. Phosphorylates SCC1/MCD1 and NET1. The sequence is that of Cell cycle serine/threonine-protein kinase CDC5/MSD2 (CDC5) from Saccharomyces cerevisiae (strain ATCC 204508 / S288c) (Baker's yeast).